The sequence spans 469 residues: Proline--tRNA ligase (469 aa).

This sequence belongs to the class-II aminoacyl-tRNA synthetase family. ProS type 3 subfamily. Homodimer.

The protein localises to the cytoplasm. It catalyses the reaction tRNA(Pro) + L-proline + ATP = L-prolyl-tRNA(Pro) + AMP + diphosphate. Catalyzes the attachment of proline to tRNA(Pro) in a two-step reaction: proline is first activated by ATP to form Pro-AMP and then transferred to the acceptor end of tRNA(Pro). In Methanosphaera stadtmanae (strain ATCC 43021 / DSM 3091 / JCM 11832 / MCB-3), this protein is Proline--tRNA ligase.